We begin with the raw amino-acid sequence, 80 residues long: U19-lycotoxin-Ls1b (80 aa).

An N-terminal signal peptide occupies residues 1–22; the sequence is MSPKVQALIFIVGLITLLAAHA. The propeptide occupies 23–34; the sequence is QEELSDNIESER. Cystine bridges form between C36/C50, C43/C55, C49/C66, and C57/C64.

The protein belongs to the neurotoxin 02 (plectoxin) family. 05 (U19-lycotoxin) subfamily. Expressed by the venom gland.

The protein resides in the secreted. The protein is U19-lycotoxin-Ls1b of Lycosa singoriensis (Wolf spider).